Consider the following 201-residue polypeptide: Large ribosomal subunit protein uL4 (201 aa).

The disordered stretch occupies residues 46-71 (QKTRAEVIGSGKKPWRQKGTGRARAG).

Belongs to the universal ribosomal protein uL4 family. In terms of assembly, part of the 50S ribosomal subunit.

In terms of biological role, one of the primary rRNA binding proteins, this protein initially binds near the 5'-end of the 23S rRNA. It is important during the early stages of 50S assembly. It makes multiple contacts with different domains of the 23S rRNA in the assembled 50S subunit and ribosome. Functionally, forms part of the polypeptide exit tunnel. This is Large ribosomal subunit protein uL4 from Shewanella sediminis (strain HAW-EB3).